Here is a 2053-residue protein sequence, read N- to C-terminus: Integrator complex subunit 1 (2053 aa).

Disordered regions lie at residues Lys36 to Ser58 and Ser249 to Pro285. The segment covering Asp268 to Ser283 has biased composition (polar residues). The chain crosses the membrane as a helical span at residues Leu708–Asn728.

This sequence belongs to the Integrator subunit 1 family. As to quaternary structure, belongs to the multiprotein complex Integrator, at least composed of IntS1, IntS2, IntS3, IntS4, omd/IntS5, IntS6, defl/IntS7, IntS8, IntS9, IntS10, IntS11, IntS12, asun/IntS13, IntS14 and IntS15. The core complex associates with protein phosphatase 2A subunits mts/PP2A and Pp2A-29B, to form the Integrator-PP2A (INTAC) complex. Within the complex, interacts with IntS12 and IntS9. Interaction with IntS12 is likely to be important for promoting 3'-end processing of snRNAs. Interacts with Mediator complex members Cdk8 and CycC.

It localises to the nucleus membrane. The protein resides in the nucleus. Functionally, component of the integrator complex, a multiprotein complex that terminates RNA polymerase II (Pol II) transcription in the promoter-proximal region of genes. The integrator complex provides a quality checkpoint during transcription elongation by driving premature transcription termination of transcripts that are unfavorably configured for transcriptional elongation: the complex terminates transcription by (1) catalyzing dephosphorylation of the C-terminal domain (CTD) of Pol II subunit Polr2A/Rbp1 and Spt5, and (2) degrading the exiting nascent RNA transcript via endonuclease activity. The integrator complex is also involved in the 3'-end processing of the U7 snRNA, and also the spliceosomal snRNAs U1, U2, U4 and U5. Required for the normal expression of the Integrator complex component IntS12. The chain is Integrator complex subunit 1 from Drosophila melanogaster (Fruit fly).